Here is a 371-residue protein sequence, read N- to C-terminus: MSKRDYYEVLGLSKGASKDEIKKAYRRLAKKYHPDVSKEENAIEKFKEVQEAYEVLSDDQKRAQYDQFGHAGANQGFGGFGGGGDFGGGFGFEDIFSSFFGGGGGRRRDPNAPRQGADLQYQVTLDFEEAIFGKELNVEIPVEDPCDTCKGSGAKPGTSKETCKHCSGSGQVSVEQNTPFGRIVNRQACSHCSGTGQMIKEKCTTCHGSGKVRKRKKINVKIPAGIDNGQQIRVSGKGEAGVNGGPAGDLYVVVHVRSHEFFEREGDHIICEMPLTFAQMALGAEVEVPTVHGKVKLKIPAGTQTGTEFRLKGKGAPNVRGYGQGDQYVVVRVVVPTKLTSHQKDLLREFAGQEEQDDSLFGKLKRAFKGE.

One can recognise a J domain in the interval 5-69 (DYYEVLGLSK…QKRAQYDQFG (65 aa)). The CR-type zinc-finger motif lies at 133–215 (GKELNVEIPV…CHGSGKVRKR (83 aa)). Residues Cys-146, Cys-149, Cys-163, Cys-166, Cys-189, Cys-192, Cys-203, and Cys-206 each contribute to the Zn(2+) site. 4 CXXCXGXG motif repeats span residues 146-153 (CDTCKGSG), 163-170 (CKHCSGSG), 189-196 (CSHCSGTG), and 203-210 (CTTCHGSG).

The protein belongs to the DnaJ family. As to quaternary structure, homodimer. Requires Zn(2+) as cofactor.

It is found in the cytoplasm. In terms of biological role, participates actively in the response to hyperosmotic and heat shock by preventing the aggregation of stress-denatured proteins and by disaggregating proteins, also in an autonomous, DnaK-independent fashion. Unfolded proteins bind initially to DnaJ; upon interaction with the DnaJ-bound protein, DnaK hydrolyzes its bound ATP, resulting in the formation of a stable complex. GrpE releases ADP from DnaK; ATP binding to DnaK triggers the release of the substrate protein, thus completing the reaction cycle. Several rounds of ATP-dependent interactions between DnaJ, DnaK and GrpE are required for fully efficient folding. Also involved, together with DnaK and GrpE, in the DNA replication of plasmids through activation of initiation proteins. The polypeptide is Chaperone protein DnaJ (Bacillus cereus (strain 03BB102)).